Reading from the N-terminus, the 208-residue chain is FMN-dependent NADH:quinone oxidoreductase (208 aa).

Residues 17-19, 99-102, and 143-146 each bind FMN; these read SNS, MWNL, and SRGG.

It belongs to the azoreductase type 1 family. As to quaternary structure, homodimer. FMN is required as a cofactor.

It catalyses the reaction 2 a quinone + NADH + H(+) = 2 a 1,4-benzosemiquinone + NAD(+). The catalysed reaction is N,N-dimethyl-1,4-phenylenediamine + anthranilate + 2 NAD(+) = 2-(4-dimethylaminophenyl)diazenylbenzoate + 2 NADH + 2 H(+). In terms of biological role, quinone reductase that provides resistance to thiol-specific stress caused by electrophilic quinones. Its function is as follows. Also exhibits azoreductase activity. Catalyzes the reductive cleavage of the azo bond in aromatic azo compounds to the corresponding amines. The chain is FMN-dependent NADH:quinone oxidoreductase from Staphylococcus aureus (strain bovine RF122 / ET3-1).